The chain runs to 430 residues: Enolase (430 aa).

Gln162 provides a ligand contact to (2R)-2-phosphoglycerate. Glu204 serves as the catalytic Proton donor. Asp242, Glu289, and Asp316 together coordinate Mg(2+). (2R)-2-phosphoglycerate is bound by residues Lys341, Arg370, Ser371, and Lys392. Lys341 functions as the Proton acceptor in the catalytic mechanism.

Belongs to the enolase family. It depends on Mg(2+) as a cofactor.

The protein resides in the cytoplasm. Its subcellular location is the secreted. It localises to the cell surface. It catalyses the reaction (2R)-2-phosphoglycerate = phosphoenolpyruvate + H2O. It functions in the pathway carbohydrate degradation; glycolysis; pyruvate from D-glyceraldehyde 3-phosphate: step 4/5. Functionally, catalyzes the reversible conversion of 2-phosphoglycerate (2-PG) into phosphoenolpyruvate (PEP). It is essential for the degradation of carbohydrates via glycolysis. The polypeptide is Enolase (Flavobacterium johnsoniae (strain ATCC 17061 / DSM 2064 / JCM 8514 / BCRC 14874 / CCUG 350202 / NBRC 14942 / NCIMB 11054 / UW101) (Cytophaga johnsonae)).